The primary structure comprises 404 residues: Serine/threonine transporter SstT (404 aa).

Helical transmembrane passes span 17 to 37 (IGIGVVIGVMLGILAPDLTGF), 39 to 59 (ILGKLFVGGLKAIAPLLVFAL), 75 to 95 (MTLIIVLYLFGTFASALVAVL), 138 to 158 (ALATANYIGVLSWAIIFGLAL), 179 to 199 (IVVWIINLAPIGIMSLVFTTI), 212 to 232 (FLILVLVGTMVFVALVVNPLI), 287 to 307 (IPLGATINMGGAAITINVLTL), and 313 to 333 (FGIPIDFLTALLLSVVAAVSA).

This sequence belongs to the dicarboxylate/amino acid:cation symporter (DAACS) (TC 2.A.23) family.

Its subcellular location is the cell membrane. It carries out the reaction L-serine(in) + Na(+)(in) = L-serine(out) + Na(+)(out). The enzyme catalyses L-threonine(in) + Na(+)(in) = L-threonine(out) + Na(+)(out). Its function is as follows. Involved in the import of serine and threonine into the cell, with the concomitant import of sodium (symport system). This Streptococcus pyogenes serotype M12 (strain MGAS2096) protein is Serine/threonine transporter SstT.